The chain runs to 299 residues: Protein sprouty homolog 4 (299 aa).

The residue at position 1 (Met-1) is an N-acetylmethionine. 2 disordered regions span residues 50 to 79 (NDYIDNPGLAPPSGPKRTRGGAPELAPTPA) and 92 to 127 (FSGRPSSVSSSSSTSSDQRLLDHMAPPPVADQASPR). Over residues 92 to 107 (FSGRPSSVSSSSSTSS) the composition is skewed to low complexity. A Phosphoserine modification is found at Ser-125. Residues 166 to 273 (KCKECASPRT…GYDRLRRPGC (108 aa)) enclose the SPR domain.

The protein belongs to the sprouty family. Interacts (via C-terminus) with TESK1 (via both C- and N-termini); the interaction inhibits TESK1 kinase activity. Interacts with RAF1. Interacts with CAV1 (via C-terminus).

It localises to the cytoplasm. It is found in the cell projection. The protein localises to the ruffle membrane. Functionally, suppresses the insulin receptor and EGFR-transduced MAPK signaling pathway, but does not inhibit MAPK activation by a constitutively active mutant Ras. Probably impairs the formation of GTP-Ras. Inhibits Ras-independent, but not Ras-dependent, activation of RAF1. Represses integrin-mediated cell spreading via inhibition of TESK1-mediated phosphorylation of cofilin. This is Protein sprouty homolog 4 (SPRY4) from Bos taurus (Bovine).